A 421-amino-acid chain; its full sequence is D-amino acid dehydrogenase (421 aa).

3–17 (VIVLGSGVIGVASAY) provides a ligand contact to FAD.

This sequence belongs to the DadA oxidoreductase family. The cofactor is FAD.

It catalyses the reaction a D-alpha-amino acid + A + H2O = a 2-oxocarboxylate + AH2 + NH4(+). The protein operates within amino-acid degradation; D-alanine degradation; NH(3) and pyruvate from D-alanine: step 1/1. Its function is as follows. Oxidative deamination of D-amino acids. This is D-amino acid dehydrogenase from Acinetobacter baumannii (strain SDF).